A 253-amino-acid polypeptide reads, in one-letter code: tRNA (guanine-N(1)-)-methyltransferase (253 aa).

S-adenosyl-L-methionine-binding positions include Gly-111 and 131–136; that span reads LGDFVL.

This sequence belongs to the RNA methyltransferase TrmD family. Homodimer.

Its subcellular location is the cytoplasm. The enzyme catalyses guanosine(37) in tRNA + S-adenosyl-L-methionine = N(1)-methylguanosine(37) in tRNA + S-adenosyl-L-homocysteine + H(+). In terms of biological role, specifically methylates guanosine-37 in various tRNAs. This Synechococcus sp. (strain JA-3-3Ab) (Cyanobacteria bacterium Yellowstone A-Prime) protein is tRNA (guanine-N(1)-)-methyltransferase.